The following is a 179-amino-acid chain: Large ribosomal subunit protein uL5 (179 aa).

This sequence belongs to the universal ribosomal protein uL5 family. Part of the 50S ribosomal subunit; part of the 5S rRNA/L5/L18/L25 subcomplex. Contacts the 5S rRNA and the P site tRNA. Forms a bridge to the 30S subunit in the 70S ribosome.

Its function is as follows. This is one of the proteins that bind and probably mediate the attachment of the 5S RNA into the large ribosomal subunit, where it forms part of the central protuberance. In the 70S ribosome it contacts protein S13 of the 30S subunit (bridge B1b), connecting the 2 subunits; this bridge is implicated in subunit movement. Contacts the P site tRNA; the 5S rRNA and some of its associated proteins might help stabilize positioning of ribosome-bound tRNAs. The chain is Large ribosomal subunit protein uL5 from Nitratidesulfovibrio vulgaris (strain DSM 19637 / Miyazaki F) (Desulfovibrio vulgaris).